Here is a 392-residue protein sequence, read N- to C-terminus: Elongation factor Tu (392 aa).

A tr-type G domain is found at 10–202; sequence KVHVNVGTIG…VLDEYIEDPI (193 aa). The interval 19–26 is G1; that stretch reads GHVDHGKT. 19–26 serves as a coordination point for GTP; sequence GHVDHGKT. T26 provides a ligand contact to Mg(2+). Positions 60 to 64 are G2; it reads GITIN. The segment at 81–84 is G3; it reads DCPG. GTP contacts are provided by residues 81-85 and 136-139; these read DCPGH and NKCD. Residues 136-139 form a G4 region; it reads NKCD. The segment at 174 to 176 is G5; that stretch reads SAL.

This sequence belongs to the TRAFAC class translation factor GTPase superfamily. Classic translation factor GTPase family. EF-Tu/EF-1A subfamily. In terms of assembly, monomer.

The protein resides in the cytoplasm. The catalysed reaction is GTP + H2O = GDP + phosphate + H(+). GTP hydrolase that promotes the GTP-dependent binding of aminoacyl-tRNA to the A-site of ribosomes during protein biosynthesis. The chain is Elongation factor Tu from Phytoplasma mali (strain AT).